Here is a 162-residue protein sequence, read N- to C-terminus: Shikimate kinase (162 aa).

Residue 11-16 participates in ATP binding; it reads GSGKSS. Ser15 provides a ligand contact to Mg(2+). Asp33, Arg57, and Gly80 together coordinate substrate. Arg116 contacts ATP. Residue Arg132 participates in substrate binding.

This sequence belongs to the shikimate kinase family. Monomer. The cofactor is Mg(2+).

Its subcellular location is the cytoplasm. The enzyme catalyses shikimate + ATP = 3-phosphoshikimate + ADP + H(+). Its pathway is metabolic intermediate biosynthesis; chorismate biosynthesis; chorismate from D-erythrose 4-phosphate and phosphoenolpyruvate: step 5/7. Catalyzes the specific phosphorylation of the 3-hydroxyl group of shikimic acid using ATP as a cosubstrate. This chain is Shikimate kinase, found in Helicobacter pylori (strain Shi470).